We begin with the raw amino-acid sequence, 331 residues long: MENLKQILADALSAVAASESESALDDVRVHYLGKKGALTALLKQLGNVSAEDRPKFGQMVNEAKDQVQEKITERKASLAKAALDAKLATETIDISLSGKGQEVGGLHPVTRTMERIETFFRGIGFDVASGPEIEDDYHNFEALNIPAHHPARAMQDTFYFNPSTVLRTHTSPVQVRTMETTQPPIRIICPGRVYRCDSDQTHTPMFHQVEGLLIDENISFADLKGILQQFLNVFFEDDLKVRFRPSYFPFTEPSIEVDIMRTNSKGEESWLEVLGCGMVHPKVLEMSGIDSEKYTGFAFGMGVERFAMLRYKVDDLRMFFENDLRFLKQFK.

Glu-252 contacts Mg(2+).

Belongs to the class-II aminoacyl-tRNA synthetase family. Phe-tRNA synthetase alpha subunit type 1 subfamily. As to quaternary structure, tetramer of two alpha and two beta subunits. It depends on Mg(2+) as a cofactor.

Its subcellular location is the cytoplasm. It catalyses the reaction tRNA(Phe) + L-phenylalanine + ATP = L-phenylalanyl-tRNA(Phe) + AMP + diphosphate + H(+). This is Phenylalanine--tRNA ligase alpha subunit from Marinomonas sp. (strain MWYL1).